Reading from the N-terminus, the 139-residue chain is Cellular retinoic acid-binding protein 2 (139 aa).

Positions 21–31 (KALGVNMMMRK) match the Nuclear localization signal motif. K103 participates in a covalent cross-link: Glycyl lysine isopeptide (Lys-Gly) (interchain with G-Cter in SUMO). 134–136 (RVY) contacts all-trans-retinoate.

It belongs to the calycin superfamily. Fatty-acid binding protein (FABP) family. In terms of assembly, interacts with importin alpha, RXR and RARA. Sumoylated in response to retinoic acid binding, sumoylation is critical for dissociation from ER and subsequent nuclear translocation.

The protein localises to the cytoplasm. It is found in the endoplasmic reticulum. The protein resides in the nucleus. Its function is as follows. Transports retinoic acid to the nucleus. Regulates the access of retinoic acid to the nuclear retinoic acid receptors. The polypeptide is Cellular retinoic acid-binding protein 2 (Crabp2) (Rattus norvegicus (Rat)).